Consider the following 62-residue polypeptide: Small, acid-soluble spore protein A (62 aa).

It belongs to the alpha/beta-type SASP family.

Functionally, SASP are bound to spore DNA. They are double-stranded DNA-binding proteins that cause DNA to change to an a-like conformation. They protect the DNA backbone from chemical and enzymatic cleavage and are thus involved in dormant spore's high resistance to UV light. The chain is Small, acid-soluble spore protein A (sasP-A) from Priestia megaterium (Bacillus megaterium).